The primary structure comprises 272 residues: TLC domain-containing protein 4 C (272 aa).

Helical transmembrane passes span 16–36 (FSNS…FIIY), 71–91 (VSMI…VESF), 103–123 (SLLM…IICY), 128–148 (LVGT…IYVA), 155–175 (CFVP…PLNM), 196–216 (FVIT…IYLV), and 233–253 (VFIT…FLLI). The 201-residue stretch at 61–261 (KKKLEWDQRV…LIKKLYQTYL (201 aa)) folds into the TLC domain.

It belongs to the TLCD4 family.

Its subcellular location is the membrane. This chain is TLC domain-containing protein 4 C (tlcd4c), found in Dictyostelium discoideum (Social amoeba).